The primary structure comprises 239 residues: Ribonuclease HII (239 aa).

In terms of domain architecture, RNase H type-2 spans G30–P221. A divalent metal cation contacts are provided by D36, E37, and D130.

The protein belongs to the RNase HII family. Mn(2+) is required as a cofactor. The cofactor is Mg(2+).

The protein resides in the cytoplasm. The catalysed reaction is Endonucleolytic cleavage to 5'-phosphomonoester.. Endonuclease that specifically degrades the RNA of RNA-DNA hybrids. This is Ribonuclease HII from Mycobacterium sp. (strain JLS).